Here is a 295-residue protein sequence, read N- to C-terminus: MSFLNNDFGSPPATSSPPTTMPKLPTIQDMLNNIGASTVNLMQPNPYLMQNQIPLPVPNLPLNPFLHLNPAISQEIIQQFIAMSFNTPNVLASIANMGDDEGPSCNPKMRRGDLLKSVSMDSTEDPPSITLDNNGDMIVPNNDKEGWCRNKKYIEQTENGYMCTVCRKVYGRYNSVSYHVTIYHRNPPIKCNVPNCQFTTREARYIHFHKNYRHGIPLPESIDQGSRKCPHCRHVSKSPAMLEKHIRRHQIKDGLSNINEAIRERTSTICDEAMEIEPAETEVDPIETKPRSCTL.

The disordered stretch occupies residues 1-23; it reads MSFLNNDFGSPPATSSPPTTMPK. Residues 10 to 22 are compositionally biased toward low complexity; it reads SPPATSSPPTTMP. Residues 161 to 183 form a C2H2-type 1; degenerate zinc finger; it reads YMCTVCRKVYGRYNSVSYHVTIY. A C2H2-type 2 zinc finger spans residues 227 to 249; it reads RKCPHCRHVSKSPAMLEKHIRRH.

This sequence belongs to the krueppel C2H2-type zinc-finger protein family. As to quaternary structure, interacts with ceh-60.

Its subcellular location is the chromosome. The protein localises to the nucleus. It is found in the cytoplasm. Its function is as follows. Zinc finger transcription factor which acts as both a transcriptional activator and repressor. Binds to the promoters of genes that contain the 5'-CTTATCA-3' DNA consensus sequence in their regulatory region. Functions downstream of the Insulin/IGF-1-like signaling (IIS) mediated pathway. Involved in normal development, lifespan, stress response, lipid metabolism, innate immunity and exit from the developmentally arrested larval state known as dauer. Required for stress-induced expression of hsp-90 and resistance to heat stress, perhaps as part of a systemic stress signaling pathway. Involved in maintenance of proteostasis. Under hypoxic stress increases lipid levels by positively regulating fatty acid synthesis via fat-7 expression. Associates with homeobox protein ceh-60 at the promoters of some stress-responsive genes to regulate expression; may require phosphorylation for transcriptional repression activity. Acts downstream of nhr-14 to activate transcription of intestinal metal transporter smf-3, modulating innate immunity and iron uptake. May act downstream of the mTORC2 signaling mediated pathway. May act in a mutually exclusive manner with the FOXO transcription factor daf-16. In Caenorhabditis elegans, this protein is Zinc finger transcription factor pqm-1.